Consider the following 244-residue polypeptide: DNA repair protein RecO (244 aa).

This sequence belongs to the RecO family.

Involved in DNA repair and RecF pathway recombination. The polypeptide is DNA repair protein RecO (Geobacter metallireducens (strain ATCC 53774 / DSM 7210 / GS-15)).